A 382-amino-acid chain; its full sequence is MRSGGRGRPRLRLGERGVMEPLLPPKRRLLPRVRLLPLLLALAVGSAFYTIWSGWHRRTEELPLGRELRVPLIGSLPEARLRRVVGQLDPQRLWGTYLRPLLVVRTPGSPGNLQVRKFLEATLRSLTAGWHVELDPFTASTPLGPVDFGNVVATLDPGAARHLTLACHYDSKLFPPGSTPFVGATDSAVPCALLLELAQALDLELSRAKEQAAPVTLQLLFLDGEEALKEWGPKDSLYGSRHLAQLMESIPHSPGPTRIQAIELFMLLDLLGAPNPTFYSHFPRTVRWFHRLRSIEKRLHRLNLLQSHPQEVMYFQPGEPFGSVEDDHIPFLRRGVPVLHLISTPFPAVWHTPADTEANLHPPTVHNLSRILAVFLAEYLGL.

The chain crosses the membrane as a helical span at residues 35–55; the sequence is LLPLLLALAVGSAFYTIWSGW. A disulfide bridge links C167 with C191. Zn(2+) is bound at residue D186. E225 functions as the Proton acceptor in the catalytic mechanism. Position 226 (E226) interacts with Zn(2+). The Proton acceptor role is filled by D269. H351 is a Zn(2+) binding site.

The protein belongs to the glutaminyl-peptide cyclotransferase family.

The protein resides in the golgi apparatus membrane. It catalyses the reaction N-terminal L-glutaminyl-[peptide] = N-terminal 5-oxo-L-prolyl-[peptide] + NH4(+). Its function is as follows. Responsible for the biosynthesis of pyroglutamyl peptides. This Macaca fascicularis (Crab-eating macaque) protein is Glutaminyl-peptide cyclotransferase-like protein (QPCTL).